Here is a 396-residue protein sequence, read N- to C-terminus: S-adenosylmethionine synthase 2 (396 aa).

Glu13 contacts Mg(2+). His19 is an ATP binding site. Glu47 contributes to the K(+) binding site. L-methionine contacts are provided by Glu60 and Gln103. ATP-binding positions include 171–173 (DGK), 239–242 (SGRF), Asp250, 256–257 (RK), Ala273, Lys277, and Lys281. An L-methionine-binding site is contributed by Asp250. Lys281 is an L-methionine binding site.

It belongs to the AdoMet synthase family. Homotetramer. Mn(2+) serves as cofactor. Requires Mg(2+) as cofactor. The cofactor is Co(2+). K(+) is required as a cofactor.

It localises to the cytoplasm. The catalysed reaction is L-methionine + ATP + H2O = S-adenosyl-L-methionine + phosphate + diphosphate. Its pathway is amino-acid biosynthesis; S-adenosyl-L-methionine biosynthesis; S-adenosyl-L-methionine from L-methionine: step 1/1. In terms of biological role, catalyzes the formation of S-adenosylmethionine from methionine and ATP. The reaction comprises two steps that are both catalyzed by the same enzyme: formation of S-adenosylmethionine (AdoMet) and triphosphate, and subsequent hydrolysis of the triphosphate. This Dianthus caryophyllus (Carnation) protein is S-adenosylmethionine synthase 2 (SAM2).